The sequence spans 338 residues: Putative clathrin assembly protein At5g10410 (338 aa).

In terms of domain architecture, ENTH spans 27 to 157; sequence FGSTAVKYIH…WVPKVLGSFP (131 aa).

The protein localises to the membrane. The protein resides in the clathrin-coated pit. It is found in the golgi apparatus. It localises to the cytoplasmic vesicle. Its subcellular location is the clathrin-coated vesicle. This Arabidopsis thaliana (Mouse-ear cress) protein is Putative clathrin assembly protein At5g10410.